Consider the following 160-residue polypeptide: Nucleotide-binding protein CPS_1098 (160 aa).

The protein belongs to the YajQ family.

Its function is as follows. Nucleotide-binding protein. In Colwellia psychrerythraea (strain 34H / ATCC BAA-681) (Vibrio psychroerythus), this protein is Nucleotide-binding protein CPS_1098.